A 941-amino-acid polypeptide reads, in one-letter code: MAKHDLSDATLPDFKALEAECMSIVLQNGKVPETRAAILPLLKKASIDGREAALRHLTTNGSGLECAGMISNLQDNLITLVHRMVTQAVYPTTQQEFAVAAVGGYGRSTLAPGSDIDLLFLLSVKAGADARKAVEFLLYILWDLGFKVGHATRLVEECIRLSRTDMTIRTAILETRFICGEALLVGELQKRFDAEVVEKTAPEFIAAKLAERDERHRKAGDTRYLVEPNVKEGKGGLRDLHTLFWIAKYYYRISDPADLVKLGVLSRQEWRMFQKSDDFLWAVRCHMHFATGKPEERLSFDLQPEIARNLGYNARPGLSEVERFMKHYFHVAKNVGDLTRIVCASLEDKQAKAAPGLTAAIGRFAHRPRRIPGTPEFIEDRGRIALSGPDIFKRDPINIMRFFHVADLHGLEFHPDALKAITRCLPLIDHDFRENEEANRLFLSILTSKRDPALMLTRMNEAGVLGKFIPDFGRIVSMMQFNMYHHYTVDEHLIRSVGILAEVDQGQHADIHPLAVKLMPNIEERTVLFVAVLLHDIAKGRQEDHSIAGAKVARRLCPRLGLNDKQTELVVWLIDQHLLMSMVAQTRDLHDRKTITDFAEKVQSLDRLRMLLVLTVCDIRAVGPGVWNGWKGQLLRTLYYETELLLSGGFSESPRKERAKQAAEQLAEALSDWSQKDQKTYTKLHYQPYLLTVPLEDQVRHAHFIRQADKADQALATMVRTHSFHAITEITVLAPDHPRLLSIIAGACAAAGANIADAQIFTTSDGRALDTILINREFPIDEDEMRRANTISKMIEDVLAGKKRLPEVIATRTKGRKRNKTFTVKPHVTISNSLSNKFTVIEIECLDRIGLLAEVTAVLADLSLDIHSARITTFGEKVIDTFYVIDLVGQKITNENRQGSISVRLKAVMSEQPDELREQMPSGIIAPAATKSPAAEKKARV.

Positions M1 to P372 are uridylyltransferase. Residues G373 to T728 form a uridylyl-removing region. An HD domain is found at V489–L611. ACT domains lie at E729–A810 and V840–Q919. A disordered region spans residues L916–V941.

Belongs to the GlnD family. Mg(2+) serves as cofactor.

The catalysed reaction is [protein-PII]-L-tyrosine + UTP = [protein-PII]-uridylyl-L-tyrosine + diphosphate. It carries out the reaction [protein-PII]-uridylyl-L-tyrosine + H2O = [protein-PII]-L-tyrosine + UMP + H(+). Its activity is regulated as follows. Uridylyltransferase (UTase) activity is inhibited by glutamine, while glutamine activates uridylyl-removing (UR) activity. Modifies, by uridylylation and deuridylylation, the PII regulatory proteins (GlnB and homologs), in response to the nitrogen status of the cell that GlnD senses through the glutamine level. Under low glutamine levels, catalyzes the conversion of the PII proteins and UTP to PII-UMP and PPi, while under higher glutamine levels, GlnD hydrolyzes PII-UMP to PII and UMP (deuridylylation). Thus, controls uridylylation state and activity of the PII proteins, and plays an important role in the regulation of nitrogen assimilation and metabolism. This chain is Bifunctional uridylyltransferase/uridylyl-removing enzyme, found in Allorhizobium ampelinum (strain ATCC BAA-846 / DSM 112012 / S4) (Agrobacterium vitis (strain S4)).